The chain runs to 365 residues: Terpene cyclase 4 (365 aa).

Positions 1-11 are enriched in pro residues; sequence MVPSLITPPPS. Residues 1 to 20 form a disordered region; sequence MVPSLITPPPSRSGEATPQK. Mg(2+)-binding residues include aspartate 118, asparagine 260, and serine 264. Residues 118-122 carry the D(D/E)XX(D/E) motif motif; it reads DDPFD. An NSE motif motif is present at residues 260–268; it reads NDLCSYRKD. Residues 341–348 carry the WxxxxxRY motif motif; that stretch reads WSLYTFRY. Positions 347 and 348 each coordinate (2E,6E)-farnesyl diphosphate.

It belongs to the terpene synthase family. Homodimer. Mg(2+) serves as cofactor.

The enzyme catalyses (2E,6E)-farnesyl diphosphate + H2O = koraiol + diphosphate. Its pathway is sesquiterpene biosynthesis. Its function is as follows. Terpene cyclase that catalyzes the cyclization of farnesyl diphosphate (FPP) to the sesquiterpene koraiol. This chain is Terpene cyclase 4, found in Gibberella fujikuroi (strain CBS 195.34 / IMI 58289 / NRRL A-6831) (Bakanae and foot rot disease fungus).